Consider the following 217-residue polypeptide: Translation initiation factor IF-3 (217 aa).

The protein belongs to the IF-3 family. Monomer.

The protein resides in the cytoplasm. IF-3 binds to the 30S ribosomal subunit and shifts the equilibrium between 70S ribosomes and their 50S and 30S subunits in favor of the free subunits, thus enhancing the availability of 30S subunits on which protein synthesis initiation begins. In Synechococcus sp. (strain CC9902), this protein is Translation initiation factor IF-3.